We begin with the raw amino-acid sequence, 178 residues long: Interleukin-10 (178 aa).

The signal sequence occupies residues 1–18 (MPSSALLYCLILLAGVRP). 2 disulfide bridges follow: Cys-30–Cys-126 and Cys-80–Cys-132. An N-linked (GlcNAc...) asparagine glycan is attached at Asn-134.

It belongs to the IL-10 family. As to quaternary structure, homodimer. Interacts with IL10RA and IL10RB.

Its subcellular location is the secreted. Functionally, major immune regulatory cytokine that acts on many cells of the immune system where it has profound anti-inflammatory functions, limiting excessive tissue disruption caused by inflammation. Mechanistically, IL10 binds to its heterotetrameric receptor comprising IL10RA and IL10RB leading to JAK1 and STAT2-mediated phosphorylation of STAT3. In turn, STAT3 translocates to the nucleus where it drives expression of anti-inflammatory mediators. Targets antigen-presenting cells (APCs) such as macrophages and monocytes and inhibits their release of pro-inflammatory cytokines including granulocyte-macrophage colony-stimulating factor /GM-CSF, granulocyte colony-stimulating factor/G-CSF, IL-1 alpha, IL-1 beta, IL-6, IL-8 and TNF-alpha. Also interferes with antigen presentation by reducing the expression of MHC-class II and co-stimulatory molecules, thereby inhibiting their ability to induce T cell activation. In addition, controls the inflammatory response of macrophages by reprogramming essential metabolic pathways including mTOR signaling. The protein is Interleukin-10 (IL10) of Meriones unguiculatus (Mongolian jird).